The following is a 311-amino-acid chain: Putative S-adenosyl-L-methionine-dependent methyltransferase MRA_0152 (311 aa).

S-adenosyl-L-methionine-binding positions include aspartate 135 and 164 to 165; that span reads DL.

This sequence belongs to the UPF0677 family.

In terms of biological role, exhibits S-adenosyl-L-methionine-dependent methyltransferase activity. The sequence is that of Putative S-adenosyl-L-methionine-dependent methyltransferase MRA_0152 from Mycobacterium tuberculosis (strain ATCC 25177 / H37Ra).